The sequence spans 49 residues: Small ribosomal subunit protein eS31 (49 aa).

Zn(2+) contacts are provided by C21, C24, C39, and C42. A C4-type zinc finger spans residues 21–42 (CPRCGPGTFLADHKNRLTCGKC).

The protein belongs to the eukaryotic ribosomal protein eS31 family. In terms of assembly, part of the 30S ribosomal subunit. Requires Zn(2+) as cofactor.

This chain is Small ribosomal subunit protein eS31, found in Methanosarcina barkeri (strain Fusaro / DSM 804).